We begin with the raw amino-acid sequence, 302 residues long: MIAANFLLNLFLYPILIKLFRRRRIGQYIRKEGPDLHGYKEGTPTMGGILFVLTGFLFGMISKTTTMVLLGMFLFFLIGFLDDFLSVVRKDSTGLKTYQKALLQTLSALIMLLLIRPETNVDFFGFTIEMGKWYYLFALLVIVGSSNAMNLTDGLDGLAGWIYVSGSIPYWFFLKERGVSEDILLILGAGVLAFLVFNSKPAKIFMGDTGSITLGGVLGTVSVLTKTEFYLVLFFLIPVIETLSVILQVGSFKIFKRRIFRMSPLHHHFELIGWSEEKIVAVFTVFNLISSLVVLEIFGVIA.

9 helical membrane-spanning segments follow: residues 1–21 (MIAANFLLNLFLYPILIKLFR), 42–62 (GTPTMGGILFVLTGFLFGMIS), 68–88 (VLLGMFLFFLIGFLDDFLSVV), 123–143 (FFGFTIEMGKWYYLFALLVIV), 154–174 (GLDGLAGWIYVSGSIPYWFFL), 178–198 (GVSEDILLILGAGVLAFLVFN), 204–224 (IFMGDTGSITLGGVLGTVSVL), 229–249 (FYLVLFFLIPVIETLSVILQV), and 279–299 (IVAVFTVFNLISSLVVLEIFG).

Belongs to the glycosyltransferase 4 family. MraY subfamily. Requires Mg(2+) as cofactor.

It is found in the cell inner membrane. It catalyses the reaction UDP-N-acetyl-alpha-D-muramoyl-L-alanyl-gamma-D-glutamyl-meso-2,6-diaminopimeloyl-D-alanyl-D-alanine + di-trans,octa-cis-undecaprenyl phosphate = di-trans,octa-cis-undecaprenyl diphospho-N-acetyl-alpha-D-muramoyl-L-alanyl-D-glutamyl-meso-2,6-diaminopimeloyl-D-alanyl-D-alanine + UMP. It functions in the pathway cell wall biogenesis; peptidoglycan biosynthesis. In terms of biological role, catalyzes the initial step of the lipid cycle reactions in the biosynthesis of the cell wall peptidoglycan: transfers peptidoglycan precursor phospho-MurNAc-pentapeptide from UDP-MurNAc-pentapeptide onto the lipid carrier undecaprenyl phosphate, yielding undecaprenyl-pyrophosphoryl-MurNAc-pentapeptide, known as lipid I. This Thermotoga petrophila (strain ATCC BAA-488 / DSM 13995 / JCM 10881 / RKU-1) protein is Phospho-N-acetylmuramoyl-pentapeptide-transferase.